The chain runs to 231 residues: MSKKQRLSEEDGEVEIELDLGLSLNGRFGVDPLAKTRLMRSTSVLDLVVNDRSGLSRTCSLPVETEEEWRKRKELQSLRRLEAKRKRSEKQRKHKACGGEEKVVEEGSIGSSGSGSSGLSEVDTLLPPVQATTNKSVETSPSSAQSQPENLGKEASQNIIEDMPFVSTTGDGPNGKKINGFLYRYRKGEEVRIVCVCHGSFLSPAEFVKHAGGGDVAHPLKHIVVNPSPFL.

Positions 83–96 (AKRKRSEKQRKHKA) are enriched in basic residues. Positions 83–152 (AKRKRSEKQR…SAQSQPENLG (70 aa)) are disordered. Residues 130-152 (QATTNKSVETSPSSAQSQPENLG) show a composition bias toward polar residues.

It belongs to the Ninja family. In terms of assembly, forms a heterodimer with AFP2. Interacts with ABI5/DPBF1, DPBF2, AREB3/DPBF3, EEL/DPBF4, ABF1, ABF3/DPBF5 and ABF4/AREB2.

Its subcellular location is the nucleus. Acts as a negative regulator of abscisic acid (ABA) response and stress responses. This is Ninja-family protein AFP3 (AFP3) from Arabidopsis thaliana (Mouse-ear cress).